The chain runs to 397 residues: Acetate kinase 2 (397 aa).

Residue Asn-10 participates in Mg(2+) binding. Lys-17 contacts ATP. Residue Arg-90 coordinates substrate. Asp-147 serves as the catalytic Proton donor/acceptor. ATP is bound by residues 207-211 (HLGNG), 281-283 (DAR), and 329-333 (GIGEN). Residue Glu-385 coordinates Mg(2+).

Belongs to the acetokinase family. As to quaternary structure, homodimer. Requires Mg(2+) as cofactor. Mn(2+) serves as cofactor.

It is found in the cytoplasm. The enzyme catalyses acetate + ATP = acetyl phosphate + ADP. It functions in the pathway metabolic intermediate biosynthesis; acetyl-CoA biosynthesis; acetyl-CoA from acetate: step 1/2. Its function is as follows. Catalyzes the formation of acetyl phosphate from acetate and ATP. Can also catalyze the reverse reaction. The chain is Acetate kinase 2 from Vibrio vulnificus (strain CMCP6).